A 157-amino-acid chain; its full sequence is Hydra actinoporin-like toxin 3 (157 aa).

Positions 1–14 are cleaved as a signal peptide; that stretch reads LEATVSRNKKYKFT. Positions 129 to 131 match the Cell attachment site motif; it reads IAG.

This sequence belongs to the actinoporin family. HALT subfamily. In terms of assembly, octamer or nonamer in membranes. Monomer in the soluble state. In vitro, interacts with folate receptor alpha (of target organism).

It localises to the nematocyst. Its subcellular location is the secreted. The protein localises to the target cell membrane. In terms of biological role, pore-forming protein that forms hydrophilic pores and causes cytolysis. Compared to equinatoxin-2 (AC P61914), it reveals lower cytolysis activity (5-12-fold difference, tested on erythrocytes), a larger pore size (probably 2-3 nm) and different affinity to membrane lipids (100-fold lower affinity to sphingomyelin). Binds to the two sphingolipids, lysophosphatidic acid (LPA) and sphingosine-1-phosphate (S1P). Does not bind (or only weakly) to sulfatides (SFT). Shows cytolytic activity on HeLa cells, with a different potency than its paralogs (from most potent to less potent: HALT-4&gt;HALT-6~HALT-1&gt;HALT-3&gt;HALT-7&gt;HALT-2). Pore formation is a multi-step process that involves specific recognition of membrane lipid by a protein aromatic residues rich region, firm binding to the membrane (mainly driven by hydrophobic interactions) accompanied by the transfer of the N-terminal region to the lipid-water interface and finally pore formation after oligomerization of monomers. In vitro, binds to the folate receptor alpha (FOLR1), a GPI-anchored membrane protein that plays a major role in the uptake of folate/folic acid into cells via endocytosis, suggesting a possible involvement of this receptor in the mechanism of HALT-1-induced cell lysis. In vivo, does not cause visible paralysis in larvae of the blowfly Sarcophaga faculata, the most common arthropod prey of Hydra. The chain is Hydra actinoporin-like toxin 3 from Hydra vulgaris (Hydra).